Here is a 686-residue protein sequence, read N- to C-terminus: Glycine--tRNA ligase beta subunit (686 aa).

Belongs to the class-II aminoacyl-tRNA synthetase family. Tetramer of two alpha and two beta subunits.

Its subcellular location is the cytoplasm. It carries out the reaction tRNA(Gly) + glycine + ATP = glycyl-tRNA(Gly) + AMP + diphosphate. This chain is Glycine--tRNA ligase beta subunit, found in Geobacter metallireducens (strain ATCC 53774 / DSM 7210 / GS-15).